The primary structure comprises 291 residues: 4-diphosphocytidyl-2-C-methyl-D-erythritol kinase (291 aa).

K10 is a catalytic residue. 100 to 110 (PIGGGLGGGSS) serves as a coordination point for ATP. The active site involves D142.

It belongs to the GHMP kinase family. IspE subfamily. In terms of assembly, homodimer.

It catalyses the reaction 4-CDP-2-C-methyl-D-erythritol + ATP = 4-CDP-2-C-methyl-D-erythritol 2-phosphate + ADP + H(+). The protein operates within isoprenoid biosynthesis; isopentenyl diphosphate biosynthesis via DXP pathway; isopentenyl diphosphate from 1-deoxy-D-xylulose 5-phosphate: step 3/6. Functionally, catalyzes the phosphorylation of the position 2 hydroxy group of 4-diphosphocytidyl-2C-methyl-D-erythritol. This chain is 4-diphosphocytidyl-2-C-methyl-D-erythritol kinase, found in Hamiltonella defensa subsp. Acyrthosiphon pisum (strain 5AT).